The following is a 79-amino-acid chain: Sec-independent protein translocase protein TatA (79 aa).

Residues 1 to 21 form a helical membrane-spanning segment; sequence MGGWSSPSHWLIILLIVVLLF. Over residues 49-61 the composition is skewed to basic and acidic residues; that stretch reads EVAKNTQKIEENK. The disordered stretch occupies residues 49–79; the sequence is EVAKNTQKIEENKNTTNNTNADASIDETKKA.

The protein belongs to the TatA/E family. As to quaternary structure, the Tat system comprises two distinct complexes: a TatABC complex, containing multiple copies of TatA, TatB and TatC subunits, and a separate TatA complex, containing only TatA subunits. Substrates initially bind to the TatABC complex, which probably triggers association of the separate TatA complex to form the active translocon.

The protein localises to the cell inner membrane. Functionally, part of the twin-arginine translocation (Tat) system that transports large folded proteins containing a characteristic twin-arginine motif in their signal peptide across membranes. TatA could form the protein-conducting channel of the Tat system. The sequence is that of Sec-independent protein translocase protein TatA from Campylobacter jejuni subsp. doylei (strain ATCC BAA-1458 / RM4099 / 269.97).